Reading from the N-terminus, the 118-residue chain is Large ribosomal subunit protein bL20 (118 aa).

The protein belongs to the bacterial ribosomal protein bL20 family.

In terms of biological role, binds directly to 23S ribosomal RNA and is necessary for the in vitro assembly process of the 50S ribosomal subunit. It is not involved in the protein synthesizing functions of that subunit. In Hamiltonella defensa subsp. Acyrthosiphon pisum (strain 5AT), this protein is Large ribosomal subunit protein bL20.